We begin with the raw amino-acid sequence, 186 residues long: Ribosome-recycling factor (186 aa).

It belongs to the RRF family.

The protein resides in the cytoplasm. In terms of biological role, responsible for the release of ribosomes from messenger RNA at the termination of protein biosynthesis. May increase the efficiency of translation by recycling ribosomes from one round of translation to another. The sequence is that of Ribosome-recycling factor from Bacteroides thetaiotaomicron (strain ATCC 29148 / DSM 2079 / JCM 5827 / CCUG 10774 / NCTC 10582 / VPI-5482 / E50).